A 156-amino-acid polypeptide reads, in one-letter code: Putative pre-16S rRNA nuclease (156 aa).

The protein belongs to the YqgF nuclease family.

The protein localises to the cytoplasm. In terms of biological role, could be a nuclease involved in processing of the 5'-end of pre-16S rRNA. The chain is Putative pre-16S rRNA nuclease from Ehrlichia ruminantium (strain Welgevonden).